The primary structure comprises 101 residues: A-type ATP synthase subunit K (101 aa).

3 consecutive transmembrane segments (helical) span residues 5-25, 37-57, and 75-95; these read WLPF…AQAP, IGAG…VGMA, and ILIF…FAVL.

The protein belongs to the V-ATPase proteolipid subunit family. Has multiple subunits with at least A(3), B(3), C, D, E, F, H, I and proteolipid K(x). Post-translationally, the N-terminus is blocked.

Its subcellular location is the cell membrane. In terms of biological role, component of the A-type ATP synthase that produces ATP from ADP in the presence of a proton gradient across the membrane. This Sulfurisphaera tokodaii (strain DSM 16993 / JCM 10545 / NBRC 100140 / 7) (Sulfolobus tokodaii) protein is A-type ATP synthase subunit K.